The following is a 316-amino-acid chain: Lys-63-specific deubiquitinase BRCC36 (316 aa).

Residue Ala2 is modified to N-acetylalanine. Positions 12–179 (VHLESDAFLV…YTCFQSIQAQ (168 aa)) constitute an MPN domain. The Zn(2+) site is built by His122, His124, and Asp135. Positions 122-135 (HSHPHITVWPSHVD) match the JAMM motif motif. At Ser258 the chain carries Phosphoserine.

The protein belongs to the peptidase M67A family. BRCC36 subfamily. In terms of assembly, component of the ARISC complex, at least composed of UIMC1/RAP80, ABRAXAS1, BRCC3/BRCC36, BABAM2 and BABAM1/NBA1. Component of the BRCA1-A complex, at least composed of BRCA1, BARD1, UIMC1/RAP80, ABRAXAS1, BRCC3/BRCC36, BABAM2 and BABAM1/NBA1. In the BRCA1-A complex, interacts directly with ABRAXAS1 and BABAM2. Component of the BRISC complex, at least composed of ABRAXAS2, BRCC3/BRCC36, BABAM2 and BABAM1/NBA1. Identified in a complex with SHMT2 and the other subunits of the BRISC complex. In the BRISC complex, interacts directly with ABRAXAS2. Identified in a complex with ABRAXAS2 and NUMA1. The BRISC complex interacts with the CSN complex. Component of the BRCA1/BRCA2 containing complex (BRCC), which also contains BRCA1, BRCA2, BARD1, BABAM2 and RAD51. BRCC is a ubiquitin E3 ligase complex that enhances cellular survival following DNA damage. Interacts with BRCA1. Binds polyubiquitin. Interacts with PWWP2B. Interacts with HDAC1; this interaction is enhanced in the presence of PWWP2B. Requires Zn(2+) as cofactor.

It localises to the nucleus. It is found in the cytoplasm. Its subcellular location is the cytoskeleton. The protein resides in the spindle pole. In terms of biological role, metalloprotease that specifically cleaves 'Lys-63'-linked polyubiquitin chains. Does not have activity toward 'Lys-48'-linked polyubiquitin chains. Component of the BRCA1-A complex, a complex that specifically recognizes 'Lys-63'-linked ubiquitinated histones H2A and H2AX at DNA lesions sites, leading to target the BRCA1-BARD1 heterodimer to sites of DNA damage at double-strand breaks (DSBs). In the BRCA1-A complex, it specifically removes 'Lys-63'-linked ubiquitin on histones H2A and H2AX, antagonizing the RNF8-dependent ubiquitination at double-strand breaks (DSBs). Catalytic subunit of the BRISC complex, a multiprotein complex that specifically cleaves 'Lys-63'-linked ubiquitin in various substrates. Mediates the specific 'Lys-63'-specific deubiquitination associated with the COP9 signalosome complex (CSN), via the interaction of the BRISC complex with the CSN complex. The BRISC complex is required for normal mitotic spindle assembly and microtubule attachment to kinetochores via its role in deubiquitinating NUMA1. Plays a role in interferon signaling via its role in the deubiquitination of the interferon receptor IFNAR1; deubiquitination increases IFNAR1 activity by enhancing its stability and cell surface expression. Acts as a regulator of the NLRP3 inflammasome by mediating deubiquitination of NLRP3, leading to NLRP3 inflammasome assembly. Down-regulates the response to bacterial lipopolysaccharide (LPS) via its role in IFNAR1 deubiquitination. Deubiquitinates HDAC1 and PWWP2B leading to their stabilization. This Callithrix jacchus (White-tufted-ear marmoset) protein is Lys-63-specific deubiquitinase BRCC36 (BRCC3).